An 879-amino-acid chain; its full sequence is Nuclear autoantigen Sp-100 (879 aa).

Ala2 is subject to N-acetylalanine. Ser18 bears the Phosphoserine mark. Positions 33–149 (DLQRMFTEDQ…IYKGFENVIH (117 aa)) constitute an HSR domain. The disordered stretch occupies residues 154-245 (LQESEEEERE…EQCAQKAEPT (92 aa)). The residue at position 157 (Ser157) is a Phosphoserine. Positions 165 to 168 (RSGL) match the D-box; recognition signal for CDC20-mediated degradation motif. 3 positions are modified to phosphoserine: Ser171, Ser180, and Ser228. Residues 176 to 200 (TGENSFRSLTWPPSGSPSHAGTTPP) show a composition bias toward polar residues. The segment covering 207–228 (HPCETEQINAKRKDTTSDKDDS) has biased composition (basic and acidic residues). The span at 229–238 (LGSQQTNEQC) shows a compositional bias: polar residues. Lys241 is covalently cross-linked (Glycyl lysine isopeptide (Lys-Gly) (interchain with G-Cter in SUMO2)). A PxVxL motif motif is present at residues 284–297 (IQINSCSVRLVDIK). Residue Lys297 forms a Glycyl lysine isopeptide (Lys-Gly) (interchain with G-Cter in SUMO) linkage. Glycyl lysine isopeptide (Lys-Gly) (interchain with G-Cter in SUMO2) cross-links involve residues Lys300 and Lys306. Phosphoserine is present on residues Ser331 and Ser362. The tract at residues 333–478 (GSTDVDEPLE…SSSLRRGSGS (146 aa)) is sufficient to mediate interaction with ETS1. The interval 345 to 386 (ISAPRSEPVINNDNPLESNDEKEGQEATCSRPQIVPEPMDFR) is disordered. Residues Lys366 and Lys387 each participate in a glycyl lysine isopeptide (Lys-Gly) (interchain with G-Cter in SUMO2) cross-link. 5 positions are modified to phosphoserine: Ser394, Ser407, Ser409, Ser410, and Ser451. Positions 401-596 (GQDHDFSESS…KRGPRIPKDE (196 aa)) are disordered. The segment covering 466–482 (ETCSSSLRRGSGSQPQE) has biased composition (polar residues). Residues 530–591 (SGKRRKKRRH…LKRRRKRGPR (62 aa)) are compositionally biased toward basic residues. 2 short sequence motifs (nuclear localization signal) span residues 536–553 (KRRH…RKKD) and 568–592 (KRWQ…GPRI). Residue Lys594 forms a Glycyl lysine isopeptide (Lys-Gly) (interchain with G-Cter in SUMO2) linkage. Positions 595-676 (DENINFKQSE…KVLMENKFLP (82 aa)) constitute an SAND domain. 2 DNA-binding regions (HMG box) span residues 677-753 (EPPS…KTYI) and 769-837 (PKRP…AAYR). The Nuclear localization signal motif lies at 717–734 (KKCSETWKTIFAKEKGKF). The interval 835–879 (AYRAKGKPNSAKKRVVKAEKSKKKKEEEEDEEDEQEEENEEDDDK) is disordered. Residues 838–857 (AKGKPNSAKKRVVKAEKSKK) are compositionally biased toward basic residues. Residues 861–879 (EEEDEEDEQEEENEEDDDK) are compositionally biased toward acidic residues.

In terms of assembly, homodimer; isoforms are able to heterodimerize. Interacts with members of the HP1 family of nonhistone chromosomal protein, such as CBX5 and CBX3 via the PxVxL motif. Interacts with ETS1; the interaction is direct and modulates ETS1 transcriptional activity. Interacts with the MRN complex which is composed of two heterodimers RAD50/MRE11 associated with a single NBN; recruits the complex to PML-related bodies. Interacts with HIPK2; positively regulates TP53-dependent transcription. Interacts with CASP8AP2; may negatively regulate CASP8AP2 export from the nucleus to the cytoplasm. Interacts with SUMO1P1/SUMO5. (Microbial infection) Interacts with Epstein-Barr virus EBNA-LP; this interaction is important for EBNA-LP coactivator activity. As to quaternary structure, (Microbial infection) Interacts with human cytomegalovirus/HHV-5 protein UL123; may play a role in infection by the virus. Sumoylated. Sumoylation depends on a functional nuclear localization signal but is not necessary for nuclear import or nuclear body targeting. In terms of processing, sumoylated. Sumoylated with SUMO1. Sumoylation depends on a functional nuclear localization signal but is not necessary for nuclear import or nuclear body targeting. Sumoylation may stabilize the interaction with CBX5. Post-translationally, (Microbial infection) Immediate early protein IE1 of human cytomegalovirus (HHV-5) interferes with the sumoylation of SP100. As to expression, widely expressed. Sp100-B is expressed only in spleen, tonsil, thymus, mature B-cell line and some T-cell line, but not in brain, liver, muscle or non-lymphoid cell lines.

Its subcellular location is the nucleus. It localises to the PML body. The protein resides in the nuclear body. The protein localises to the cytoplasm. In terms of biological role, together with PML, this tumor suppressor is a major constituent of the PML bodies, a subnuclear organelle involved in a large number of physiological processes including cell growth, differentiation and apoptosis. Functions as a transcriptional coactivator of ETS1 and ETS2 according to PubMed:11909962. Under certain conditions, it may also act as a corepressor of ETS1 preventing its binding to DNA according to PubMed:15247905. Through the regulation of ETS1 it may play a role in angiogenesis, controlling endothelial cell motility and invasion. Through interaction with the MRN complex it may be involved in the regulation of telomeres lengthening. May also regulate TP53-mediated transcription and through CASP8AP2, regulate FAS-mediated apoptosis. Also plays a role in infection by viruses, including human cytomegalovirus and Epstein-Barr virus, through mechanisms that may involve chromatin and/or transcriptional regulation. This chain is Nuclear autoantigen Sp-100 (SP100), found in Homo sapiens (Human).